The following is a 294-amino-acid chain: MKIAIYGQYYQNSTEPIIKDIFAFFNSNNVEMVIEENFLNMLYEKQLVKKDYKTFPSNSALDNSFEMLISIGGDGTILRAAAFVRNSGVPLLGINAGRLGFLAKVQKENIDILLQYVINQNYTTSERTLLGLTCEPFNEAFKELNFAMNEVTVSRKDTTSMITVETYLNNEYLNSYWADGLIISTPTGSTGYSLSCGGPILTPDVKSLVITPIAPHNLTARPLVIPDDTEITLRVTGREDQYLVSLDSRISSVQNESVLKIKKTDYKIKMVEIPGETFLKTLRNKLLWGEDKRN.

Residue Asp74 is the Proton acceptor of the active site. Residues Asp74–Gly75, Arg79, Asn149–Glu150, Asp179, Thr190–Ser195, and Ala214 contribute to the NAD(+) site.

This sequence belongs to the NAD kinase family. It depends on a divalent metal cation as a cofactor.

The protein localises to the cytoplasm. It catalyses the reaction NAD(+) + ATP = ADP + NADP(+) + H(+). Functionally, involved in the regulation of the intracellular balance of NAD and NADP, and is a key enzyme in the biosynthesis of NADP. Catalyzes specifically the phosphorylation on 2'-hydroxyl of the adenosine moiety of NAD to yield NADP. The protein is NAD kinase of Flavobacterium johnsoniae (strain ATCC 17061 / DSM 2064 / JCM 8514 / BCRC 14874 / CCUG 350202 / NBRC 14942 / NCIMB 11054 / UW101) (Cytophaga johnsonae).